We begin with the raw amino-acid sequence, 588 residues long: Retrograde regulation protein 2 (588 aa).

Belongs to the GppA/Ppx family.

Its function is as follows. Required for a novel path of interorganelle communication between mitochondria, peroxisomes and the nucleus, thereby maintaining a functional metabolic interaction between the tricarboxylic acid and glyoxylate cycles. In particular, required for the retrograde expression of the peroxisomal isoform of citrate synthase, CIT2. The protein is Retrograde regulation protein 2 (RTG2) of Saccharomyces cerevisiae (strain ATCC 204508 / S288c) (Baker's yeast).